Here is a 223-residue protein sequence, read N- to C-terminus: Putative archaetidylserine decarboxylase proenzyme (223 aa).

Serine 183 acts as the Schiff-base intermediate with substrate; via pyruvic acid in catalysis. Serine 183 carries the post-translational modification Pyruvic acid (Ser); by autocatalysis.

Belongs to the phosphatidylserine decarboxylase family. PSD-A subfamily. As to quaternary structure, heterodimer of a large membrane-associated beta subunit and a small pyruvoyl-containing alpha subunit. The cofactor is pyruvate. Is synthesized initially as an inactive proenzyme. Formation of the active enzyme involves a self-maturation process in which the active site pyruvoyl group is generated from an internal serine residue via an autocatalytic post-translational modification. Two non-identical subunits are generated from the proenzyme in this reaction, and the pyruvate is formed at the N-terminus of the alpha chain, which is derived from the carboxyl end of the proenzyme. The post-translation cleavage follows an unusual pathway, termed non-hydrolytic serinolysis, in which the side chain hydroxyl group of the serine supplies its oxygen atom to form the C-terminus of the beta chain, while the remainder of the serine residue undergoes an oxidative deamination to produce ammonia and the pyruvoyl prosthetic group on the alpha chain.

It localises to the cell membrane. It catalyses the reaction archaetidylserine + H(+) = archaetidylethanolamine + CO2. Catalyzes the formation of archaetidylethanolamine (PtdEtn) from archaetidylserine (PtdSer). The protein is Putative archaetidylserine decarboxylase proenzyme of Methanothermobacter thermautotrophicus (strain ATCC 29096 / DSM 1053 / JCM 10044 / NBRC 100330 / Delta H) (Methanobacterium thermoautotrophicum).